Reading from the N-terminus, the 487-residue chain is MPSAFEKVVKNVIKEVSGSRGDLIPVDSLRNSTSFRPYCLLNRKFSSSRFWKPRYSCVNLSIKDILEPSAPEPEPECFGSFKVSDVVDGNIQGRVMLSGMGEGKISGGAAVSDSSSASMNVCILRVTQKTWETMQHERHLQQPENKILQQLRSRGDDLFVVTEVLQTKEEVQITEVHSQEGSGQFTLPGALCLKGEGKGHQSRKKMVTIPAGSILAFRVAQLLIGSKWDILLVSDEKQRTFEPSSGDRKAVGQRHHGLNVLAALCSIGKQLSLLSDGIDEEELIEAADFQGLYAEVKACSSELESLEMELRQQILVNIGKILQDQPSMEALEASLGQGLCSGGQVEPLDGPAGCILECLVLDSGELVPELAAPIFYLLGALAVLSETQQQLLAKALETTVLSKQLELVKHVLEQSTPWQEQSSVSLPTVLLGDCWDEKNPTWVLLEECGLRLQVESPQVHWEPTSLIPTSALYASLFLLSSLGQKPC.

At tyrosine 38 the chain carries Phosphotyrosine. S-(2-succinyl)cysteine occurs at positions 39, 57, and 77. 2 beta stranded membrane-spanning segments follow: residues 92 to 98 (QGRVMLS) and 104 to 109 (KISGGA). Cysteine 122 bears the S-(2-succinyl)cysteine mark. 2 consecutive transmembrane segments (beta stranded) span residues 181 to 187 (GSGQFTL) and 192 to 198 (CLKGEGK). Residues cysteine 192 and cysteine 265 each carry the S-(2-succinyl)cysteine modification. Cysteine 192 is lipidated: S-palmitoyl cysteine. The linker helix loop stretch occupies residues 278 to 298 (IDEEELIEAADFQGLYAEVKA). Cysteine 299, cysteine 434, and cysteine 487 each carry S-(2-succinyl)cysteine.

Belongs to the gasdermin family. Homooligomer; homooligomeric ring-shaped pore complex containing 27-28 subunits when inserted in the membrane. Homooligomerization is promoted by the mTORC1 complex in macrophages. In response to a canonical inflammasome stimulus, such as nigericin, recruited to NLRP3 inflammasone with similar kinetics to that of uncleaved CASP1 precursor. Although this recruitment is also observed in the absence of PYCARD, it is more efficient in its presence. Cleavage at Asp-276 by CASP1 (mature and uncleaved precursor forms), CASP4/CASP11 or CASP8 relieves autoinhibition and is sufficient to initiate pyroptosis. Cleavage by CASP1 and CASP4/CASP11 is not strictly dependent on the consensus cleavage site on GSDMD but depends on an exosite interface on CASP1 that recognizes and binds the Gasdermin-D, C-terminal (GSDMD-CT) part. Cleavage by CASP8 takes place following inactivation of MAP3K7/TAK1 by Yersinia toxin YopJ. Cleavage at Asp-88 by CASP3 or CASP7 inactivates the ability to mediate pyroptosis, but generates the Gasdermin-D, p13 chain, which translocates to the nucleus and acts as a transcription regulator. Cleavage by papain allergen generates the Gasdermin-D, p40 chain. In terms of processing, palmitoylated at Cys-192 by ZDHHC5 and ZDHHC9 in response to microbial infection and danger signals. May also be palmitoylated by ZDHHC7. Palmitoylation takes place before cleavage by caspases (CASP1, CASP4, CASP5 or CASP8) and is required for membrane translocation and pore formation. Depalmitoylated by LYPLA2. Post-translationally, succination of Cys-192 by the Krebs cycle intermediate fumarate, which leads to S-(2-succinyl)cysteine residues, inhibits processing by caspases, and ability to initiate pyroptosis. Succination modification is catalyzed by a non-enzymatic reaction caused by an accumulation of fumarate. Glycosylated: O-GlcNAcylation by OGT leads to reduced cleavage by CASP4 and decreased LPS-induced endothelial cell pyroptosis. As to expression, highly expressed in brain endothelial cells.

It localises to the cytoplasm. Its subcellular location is the cytosol. The protein resides in the inflammasome. It is found in the cell membrane. The protein localises to the secreted. It localises to the mitochondrion membrane. Its subcellular location is the nucleus. With respect to regulation, the full-length protein before cleavage is inactive: intramolecular interactions between N- and C-terminal domains mediate autoinhibition in the absence of activation signal. The intrinsic pyroptosis-inducing activity is carried by the released N-terminal moiety (Gasdermin-D, N-terminal) following cleavage by inflammatory caspases CASP1, CASP4/CASP11 or CASP8. Cleavage at Asp-88 by CASP3 or CASP7 inactivates the ability to mediate pyroptosis. Pore formation is specifically inhibited by VHH(GSDMD-1) nanobody, protecting against excessive pyroptosis. Inhibited by small molecule NU6300, which covalently reacts with Cys-191, thereby preventing palmitoylation and pyroptosis. Its function is as follows. Precursor of a pore-forming protein that plays a key role in host defense against pathogen infection and danger signals. This form constitutes the precursor of the pore-forming protein: upon cleavage, the released N-terminal moiety (Gasdermin-D, N-terminal) binds to membranes and forms pores, triggering pyroptosis. Functionally, promotes pyroptosis in response to microbial infection and danger signals. Produced by the cleavage of gasdermin-D by inflammatory caspases CASP1 or CASP4/CASP11 in response to canonical, as well as non-canonical (such as cytosolic LPS) inflammasome activators. After cleavage, moves to the plasma membrane where it strongly binds to inner leaflet lipids, including monophosphorylated phosphatidylinositols, such as phosphatidylinositol 4-phosphate, bisphosphorylated phosphatidylinositols, such as phosphatidylinositol (4,5)-bisphosphate, as well as phosphatidylinositol (3,4,5)-bisphosphate, and more weakly to phosphatidic acid and phosphatidylserine. Homooligomerizes within the membrane and forms pores of 10-15 nanometers (nm) of inner diameter, allowing the release of mature interleukin-1 (IL1B and IL18) and triggering pyroptosis. Gasdermin pores also allow the release of mature caspase-7 (CASP7). In some, but not all, cells types, pyroptosis is followed by pyroptotic cell death, which is caused by downstream activation of ninjurin-1 (NINJ1), which mediates membrane rupture (cytolysis). Also forms pores in the mitochondrial membrane, resulting in release of mitochondrial DNA (mtDNA) into the cytosol. Gasdermin-D, N-terminal released from pyroptotic cells into the extracellular milieu rapidly binds to and kills both Gram-negative and Gram-positive bacteria, without harming neighboring mammalian cells, as it does not disrupt the plasma membrane from the outside due to lipid-binding specificity. Under cell culture conditions, also active against intracellular bacteria, such as Listeria monocytogenes. Also active in response to MAP3K7/TAK1 inactivation by Yersinia toxin YopJ, which triggers cleavage by CASP8 and subsequent activation. Required for mucosal tissue defense against enteric pathogens. Activation of the non-canonical inflammasome in brain endothelial cells can lead to excessive pyroptosis, leading to blood-brain barrier breakdown. Strongly binds to bacterial and mitochondrial lipids, including cardiolipin. Does not bind to unphosphorylated phosphatidylinositol, phosphatidylethanolamine nor phosphatidylcholine. In terms of biological role, transcription coactivator produced by the cleavage by CASP3 or CASP7 in the upper small intestine in response to dietary antigens. Required to maintain food tolerance in small intestine: translocates to the nucleus and acts as a coactivator for STAT1 to induce the transcription of CIITA and MHC class II molecules, which in turn induce type 1 regulatory T (Tr1) cells in upper small intestine. Produced by the cleavage by papain allergen. After cleavage, moves to the plasma membrane and homooligomerizes within the membrane and forms pores of 10-15 nanometers (nm) of inner diameter, allowing the specific release of mature interleukin-33 (IL33), promoting type 2 inflammatory immune response. This chain is Gasdermin-D, found in Mus musculus (Mouse).